Here is a 174-residue protein sequence, read N- to C-terminus: Adenylosuccinate synthetase (174 aa).

GTP is bound by residues 13–19 (GDEGKGK) and 41–43 (GHT). Aspartate 14 acts as the Proton acceptor in catalysis. Mg(2+) contacts are provided by aspartate 14 and glycine 41. IMP is bound by residues 14-17 (DEGK), 39-42 (NAGH), threonine 130, and arginine 144. The active-site Proton donor is the histidine 42.

The protein belongs to the adenylosuccinate synthetase family. In terms of assembly, homodimer. Mg(2+) serves as cofactor.

It localises to the cytoplasm. The enzyme catalyses IMP + L-aspartate + GTP = N(6)-(1,2-dicarboxyethyl)-AMP + GDP + phosphate + 2 H(+). It functions in the pathway purine metabolism; AMP biosynthesis via de novo pathway; AMP from IMP: step 1/2. In terms of biological role, plays an important role in the de novo pathway of purine nucleotide biosynthesis. Catalyzes the first committed step in the biosynthesis of AMP from IMP. The polypeptide is Adenylosuccinate synthetase (Stutzerimonas stutzeri (Pseudomonas stutzeri)).